The chain runs to 367 residues: Heme A synthase 2 (367 aa).

Transmembrane regions (helical) follow at residues 28 to 48 (MVAI…GIGA), 114 to 134 (MWGR…LWTG), 143 to 163 (WLVT…WMVA), 180 to 200 (VHYC…LTVL), and 221 to 241 (MAMG…FLSG). H284 provides a ligand contact to heme. A run of 3 helical transmembrane segments spans residues 286-306 (LLGT…IRAD), 314-334 (AFLV…TTLV), and 340-360 (IGIV…WAWF). H344 contacts heme.

This sequence belongs to the COX15/CtaA family. Type 2 subfamily. In terms of assembly, interacts with CtaB. The cofactor is heme b.

The protein resides in the cell membrane. It catalyses the reaction Fe(II)-heme o + 2 A + H2O = Fe(II)-heme a + 2 AH2. It functions in the pathway porphyrin-containing compound metabolism; heme A biosynthesis; heme A from heme O: step 1/1. Functionally, catalyzes the conversion of heme O to heme A by two successive hydroxylations of the methyl group at C8. The first hydroxylation forms heme I, the second hydroxylation results in an unstable dihydroxymethyl group, which spontaneously dehydrates, resulting in the formyl group of heme A. The polypeptide is Heme A synthase 2 (Acidiphilium cryptum (strain JF-5)).